The following is a 655-amino-acid chain: Mannosyl-oligosaccharide 1,2-alpha-mannosidase IA (655 aa).

The Cytoplasmic portion of the chain corresponds to 1–43; the sequence is MPVGGLLPLFSSPGGGGLGSGLGGGLGGGRKGSGPAAFRLTEK. Residues 44-64 traverse the membrane as a helical; Signal-anchor for type II membrane protein segment; that stretch reads FVLLLVFSAFITLCFGAIFFL. Residues 65-655 lie on the Lumenal side of the membrane; that stretch reads PDSSKLLSGV…QKKEIDGKEK (591 aa). Residues C478 and C510 are joined by a disulfide bond. N515 is a glycosylation site (N-linked (GlcNAc...) asparagine). The Proton donor role is filled by E524. T635 is a Ca(2+) binding site.

The protein belongs to the glycosyl hydrolase 47 family. Ca(2+) serves as cofactor. In terms of processing, N-linked glycan at Asn-515 consists of Man(6)-GlcNAc(2).

It localises to the golgi apparatus membrane. It carries out the reaction N(4)-(alpha-D-Man-(1-&gt;2)-alpha-D-Man-(1-&gt;2)-alpha-D-Man-(1-&gt;3)-[alpha-D-Man-(1-&gt;2)-alpha-D-Man-(1-&gt;3)-[alpha-D-Man-(1-&gt;2)-alpha-D-Man-(1-&gt;6)]-alpha-D-Man-(1-&gt;6)]-beta-D-Man-(1-&gt;4)-beta-D-GlcNAc-(1-&gt;4)-beta-D-GlcNAc)-L-asparaginyl-[protein] (N-glucan mannose isomer 9A1,2,3B1,2,3) + 4 H2O = N(4)-(alpha-D-Man-(1-&gt;3)-[alpha-D-Man-(1-&gt;3)-[alpha-D-Man-(1-&gt;6)]-alpha-D-Man-(1-&gt;6)]-beta-D-Man-(1-&gt;4)-beta-D-GlcNAc-(1-&gt;4)-beta-D-GlcNAc)-L-asparaginyl-[protein] (N-glucan mannose isomer 5A1,2) + 4 beta-D-mannose. The enzyme catalyses N(4)-(alpha-D-Man-(1-&gt;2)-alpha-D-Man-(1-&gt;2)-alpha-D-Man-(1-&gt;3)-[alpha-D-Man-(1-&gt;3)-[alpha-D-Man-(1-&gt;2)-alpha-D-Man-(1-&gt;6)]-alpha-D-Man-(1-&gt;6)]-beta-D-Man-(1-&gt;4)-beta-D-GlcNAc-(1-&gt;4)-beta-D-GlcNAc)-L-asparaginyl-[protein] (N-glucan mannose isomer 8A1,2,3B1,3) + 3 H2O = N(4)-(alpha-D-Man-(1-&gt;3)-[alpha-D-Man-(1-&gt;3)-[alpha-D-Man-(1-&gt;6)]-alpha-D-Man-(1-&gt;6)]-beta-D-Man-(1-&gt;4)-beta-D-GlcNAc-(1-&gt;4)-beta-D-GlcNAc)-L-asparaginyl-[protein] (N-glucan mannose isomer 5A1,2) + 3 beta-D-mannose. It functions in the pathway protein modification; protein glycosylation. Inhibited by both 1-deoxymannojirimycin and kifunensine. In terms of biological role, involved in the maturation of Asn-linked oligosaccharides. Progressively trim alpha-1,2-linked mannose residues from Man(9)GlcNAc(2) to produce Man(5)GlcNAc(2). The sequence is that of Mannosyl-oligosaccharide 1,2-alpha-mannosidase IA (Man1a1) from Mus musculus (Mouse).